The following is a 209-amino-acid chain: Amelotin (209 aa).

The signal sequence occupies residues 1 to 16 (MRSTILLFCLLGSTRS). Positions 142-209 (AGANPDVQDG…ATTESANGIQ (68 aa)) are disordered.

This sequence belongs to the amelotin family. In terms of processing, phosphorylated by FAM20C in vitro. Post-translationally, O-glycosylated.

The protein resides in the secreted. Is a promoter of calcium phosphate mineralization, playing a critical role in the formation of the compact, mineralized, aprismatic enamel surface layer during the maturation stage of amelogenesis. The protein is Amelotin (AMTN) of Homo sapiens (Human).